The chain runs to 352 residues: Ion-translocating oxidoreductase complex subunit D (352 aa).

The next 5 membrane-spanning stretches (helical) occupy residues 20 to 40 (IMLLVLLAAVPGIAAQLWFFG), 42 to 62 (GTLVQILLASVSALLAEALVL), 78 to 109 (ALLTGLLLAVSIPPLAPWWMVVLGTVFAVIIA), 123 to 143 (PAMIGYVVLLISFPVQMTSWL), and 148 to 168 (IAVNILGFIDAIQVIFSGHTA). Threonine 187 carries the FMN phosphoryl threonine modification. A run of 5 helical transmembrane segments spans residues 214-234 (ILAGAGWQWVNLAWLAGGVWL), 242-262 (WHIPLSFLVTLALCATLGWLF), 267-287 (LAAPQIHLLSGATMLGAFFIL), 301-321 (LIFGALAGLLVWLIRSFGGYP), and 322-342 (DGVAFAVLLANITVPLIDYYT).

The protein belongs to the NqrB/RnfD family. As to quaternary structure, the complex is composed of six subunits: RsxA, RsxB, RsxC, RsxD, RsxE and RsxG. FMN serves as cofactor.

Its subcellular location is the cell inner membrane. Functionally, part of a membrane-bound complex that couples electron transfer with translocation of ions across the membrane. Required to maintain the reduced state of SoxR. In Shigella dysenteriae serotype 1 (strain Sd197), this protein is Ion-translocating oxidoreductase complex subunit D.